Here is a 374-residue protein sequence, read N- to C-terminus: 2-oxoglutarate-Fe(II) type oxidoreductase ppzC (374 aa).

Residues 111 to 131 (KKGPFDSGYRGPGTQRVNPDE) are disordered. The region spanning 220 to 330 (YPDASLEINF…RVSMPFFWGF (111 aa)) is the Fe2OG dioxygenase domain. Fe cation-binding residues include H254, D256, and H311. R321 contacts 2-oxoglutarate.

Belongs to the iron/ascorbate-dependent oxidoreductase family. Fe(2+) is required as a cofactor.

It catalyses the reaction peramine + 2-oxoglutarate + O2 = 8-hydroxyperamine + succinate + CO2. The protein operates within secondary metabolite biosynthesis. Its function is as follows. 2-oxoglutarate-Fe(II) type oxidoreductase; part of the gene cluster that mediates the biosynthesis of pyrrolopyrazines, secondary metabolites showing insecticidal activity. Within the pathway, ppzC uses peramine as substrate for hydroxylation to yield the novel analog 8-hydroxyperamine. The single multifunctional NRPS ppzA is sufficient to produce peramine via condensation of 1-pyrroline-5-carboxylate and arginine, N-methylation of the alpha-amino group of arginine and reduction of the thioester and the cyclization to form an iminium ion resulting in release from the peptide synthetase. Deprotonation of this intermediate and oxidation of the pyrroline ring would give rise to peramine. In Epichloe species that produce only peramine, the peramine synthetase gene is not localized in a gene cluster, in contrast to Metarhizium species that contain additional pyrrolopyrazine biosynthesis genes. The 2-oxoglutarate-Fe(II) type oxidoreductase ppzC hydroxylates peramine to yield the newly identified compound 8-hydroxyperamine whereas ppzD converts L-proline into trans-4-hydroxy-L-proline, a precursor of peramine biosynthesis. This is 2-oxoglutarate-Fe(II) type oxidoreductase ppzC (ppzC) from Metarhizium majus (strain ARSEF 297).